The sequence spans 105 residues: Saimiri transformation-associated protein (105 aa).

Residues Met1–Gly75 lie on the Cytoplasmic side of the membrane. Residues Met1–Gly75 form a disordered region. The 60-residue stretch at Gly15–Pro74 folds into the Collagen-like domain. Pro residues predominate over residues Gln20–Ser71. Residues Leu76 to Ile96 traverse the membrane as a helical segment. The Extracellular portion of the chain corresponds to Leu97–Asn105.

Binds to host RAS and TRAF2.

It is found in the host membrane. Functionally, acts synergistically with Tip to stimulate NF-kappa-B activity and interleukin-2 gene expression by binding to host TRAF proteins. Activation of NF-kappa-B protects lymphocytes from apoptosis, thereby facilitating viral induced cell transformation. The protein is Saimiri transformation-associated protein of Saimiriine herpesvirus 2 (strain 484-77) (SaHV-2).